Consider the following 357-residue polypeptide: S-adenosylmethionine decarboxylase proenzyme (357 aa).

Active-site residues include Glu11 and Glu14. Ser71 (schiff-base intermediate with substrate; via pyruvic acid) is an active-site residue. Ser71 bears the Pyruvic acid (Ser); by autocatalysis mark. Catalysis depends on Cys85, which acts as the Proton donor; for catalytic activity. Catalysis depends on proton acceptor; for processing activity residues Ser234 and His247.

The protein belongs to the eukaryotic AdoMetDC family. Requires pyruvate as cofactor. Is synthesized initially as an inactive proenzyme. Formation of the active enzyme involves a self-maturation process in which the active site pyruvoyl group is generated from an internal serine residue via an autocatalytic post-translational modification. Two non-identical subunits are generated from the proenzyme in this reaction, and the pyruvate is formed at the N-terminus of the alpha chain, which is derived from the carboxyl end of the proenzyme. The post-translation cleavage follows an unusual pathway, termed non-hydrolytic serinolysis, in which the side chain hydroxyl group of the serine supplies its oxygen atom to form the C-terminus of the beta chain, while the remainder of the serine residue undergoes an oxidative deamination to produce ammonia and the pyruvoyl group blocking the N-terminus of the alpha chain.

The enzyme catalyses S-adenosyl-L-methionine + H(+) = S-adenosyl 3-(methylsulfanyl)propylamine + CO2. It functions in the pathway amine and polyamine biosynthesis; S-adenosylmethioninamine biosynthesis; S-adenosylmethioninamine from S-adenosyl-L-methionine: step 1/1. This is S-adenosylmethionine decarboxylase proenzyme (SAMDC) from Catharanthus roseus (Madagascar periwinkle).